Reading from the N-terminus, the 74-residue chain is ATP synthase subunit 9, mitochondrial (74 aa).

2 consecutive transmembrane segments (helical) span residues leucine 12–isoleucine 32 and isoleucine 50–leucine 70.

This sequence belongs to the ATPase C chain family. In terms of assembly, F-type ATPases have 2 components, CF(1) - the catalytic core - and CF(0) - the membrane proton channel. CF(1) has five subunits: alpha(3), beta(3), gamma(1), delta(1), epsilon(1). CF(0) has three main subunits: a, b and c.

The protein resides in the mitochondrion membrane. Mitochondrial membrane ATP synthase (F(1)F(0) ATP synthase or Complex V) produces ATP from ADP in the presence of a proton gradient across the membrane which is generated by electron transport complexes of the respiratory chain. F-type ATPases consist of two structural domains, F(1) - containing the extramembraneous catalytic core and F(0) - containing the membrane proton channel, linked together by a central stalk and a peripheral stalk. During catalysis, ATP synthesis in the catalytic domain of F(1) is coupled via a rotary mechanism of the central stalk subunits to proton translocation. Part of the complex F(0) domain. A homomeric c-ring of probably 10 subunits is part of the complex rotary element. This chain is ATP synthase subunit 9, mitochondrial, found in Rhizopus oryzae (Mucormycosis agent).